The sequence spans 420 residues: D-tagatose-1,6-bisphosphate aldolase subunit GatZ (420 aa).

This sequence belongs to the GatZ/KbaZ family. GatZ subfamily. In terms of assembly, forms a complex with GatY.

Its pathway is carbohydrate metabolism; D-tagatose 6-phosphate degradation; D-glyceraldehyde 3-phosphate and glycerone phosphate from D-tagatose 6-phosphate: step 2/2. Component of the tagatose-1,6-bisphosphate aldolase GatYZ that is required for full activity and stability of the Y subunit. Could have a chaperone-like function for the proper and stable folding of GatY. When expressed alone, GatZ does not show any aldolase activity. Is involved in the catabolism of galactitol. This chain is D-tagatose-1,6-bisphosphate aldolase subunit GatZ, found in Escherichia coli O17:K52:H18 (strain UMN026 / ExPEC).